Here is a 270-residue protein sequence, read N- to C-terminus: 3-methyl-2-oxobutanoate hydroxymethyltransferase (270 aa).

The Mg(2+) site is built by aspartate 50 and aspartate 89. 3-methyl-2-oxobutanoate-binding positions include 50–51 (DS), aspartate 89, and lysine 118. Glutamate 120 is a Mg(2+) binding site. The Proton acceptor role is filled by glutamate 187.

Belongs to the PanB family. As to quaternary structure, homodecamer; pentamer of dimers. Mg(2+) is required as a cofactor.

Its subcellular location is the cytoplasm. It catalyses the reaction 3-methyl-2-oxobutanoate + (6R)-5,10-methylene-5,6,7,8-tetrahydrofolate + H2O = 2-dehydropantoate + (6S)-5,6,7,8-tetrahydrofolate. The protein operates within cofactor biosynthesis; (R)-pantothenate biosynthesis; (R)-pantoate from 3-methyl-2-oxobutanoate: step 1/2. Functionally, catalyzes the reversible reaction in which hydroxymethyl group from 5,10-methylenetetrahydrofolate is transferred onto alpha-ketoisovalerate to form ketopantoate. The sequence is that of 3-methyl-2-oxobutanoate hydroxymethyltransferase from Helicobacter pylori (strain HPAG1).